The sequence spans 155 residues: 6,7-dimethyl-8-ribityllumazine synthase (155 aa).

Residues F22, 56–58, and 80–82 each bind 5-amino-6-(D-ribitylamino)uracil; these read AFE and AVI. Residue 85–86 coordinates (2S)-2-hydroxy-3-oxobutyl phosphate; the sequence is ST. The active-site Proton donor is the H88. F113 is a 5-amino-6-(D-ribitylamino)uracil binding site. R127 is a binding site for (2S)-2-hydroxy-3-oxobutyl phosphate.

This sequence belongs to the DMRL synthase family.

It carries out the reaction (2S)-2-hydroxy-3-oxobutyl phosphate + 5-amino-6-(D-ribitylamino)uracil = 6,7-dimethyl-8-(1-D-ribityl)lumazine + phosphate + 2 H2O + H(+). Its pathway is cofactor biosynthesis; riboflavin biosynthesis; riboflavin from 2-hydroxy-3-oxobutyl phosphate and 5-amino-6-(D-ribitylamino)uracil: step 1/2. Functionally, catalyzes the formation of 6,7-dimethyl-8-ribityllumazine by condensation of 5-amino-6-(D-ribitylamino)uracil with 3,4-dihydroxy-2-butanone 4-phosphate. This is the penultimate step in the biosynthesis of riboflavin. The polypeptide is 6,7-dimethyl-8-ribityllumazine synthase (Caldicellulosiruptor bescii (strain ATCC BAA-1888 / DSM 6725 / KCTC 15123 / Z-1320) (Anaerocellum thermophilum)).